Consider the following 87-residue polypeptide: Small ribosomal subunit protein uS17 (87 aa).

This sequence belongs to the universal ribosomal protein uS17 family. As to quaternary structure, part of the 30S ribosomal subunit.

In terms of biological role, one of the primary rRNA binding proteins, it binds specifically to the 5'-end of 16S ribosomal RNA. The polypeptide is Small ribosomal subunit protein uS17 (Bacillus thuringiensis (strain Al Hakam)).